Here is a 2111-residue protein sequence, read N- to C-terminus: Mycocerosic acid synthase-like polyketide synthase (2111 aa).

The N-terminal stretch at 1–15 (MTQNCVAPVAIIGMA) is a signal peptide. A lipid anchor (N-palmitoyl cysteine) is attached at C16. C16 carries the S-diacylglycerol cysteine lipid modification. Residues 16–428 (CRLPGAINSP…GTNVHAVLEQ (413 aa)) form the Ketosynthase family 3 (KS3) domain. The active-site Acyl-thioester intermediate; for beta-ketoacyl synthase activity is the C178. Catalysis depends on for beta-ketoacyl synthase activity residues H313 and H349. Positions 430–537 (PESPAETAAE…MPQQAVTNDD (108 aa)) are linker domain (LD). The acyltransferase (AT) stretch occupies residues 538-837 (RGPVWVFSGQ…LAVFAAMRRQ (300 aa)). Residue S629 is the Acyl-ester intermediate; for acyltransferase activity of the active site. Residues 896–1176 (PSVSVHPLLG…LSAMGLQLGT (281 aa)) are dehydratase (DH). Residues 901–1025 (HPLLGSHVVL…GDVDAERPAA (125 aa)) form an N-terminal hotdog fold region. In terms of domain architecture, PKS/mFAS DH spans 901–1183 (HPLLGSHVVL…LGTGNSDKAE (283 aa)). The Proton acceptor; for dehydratase activity role is filled by H934. The interval 1036–1183 (PNRVDGDELR…LGTGNSDKAE (148 aa)) is C-terminal hotdog fold. Residue D1100 is the Proton donor; for dehydratase activity of the active site. Residues 1215–1391 (SWLVILAGDD…SPEDETAWRD (177 aa)) are pseudo beta-ketoacyl reductase (PsiKR). The segment at 1419 to 1743 (EGMRLVVRNP…QHTGKLVIDI (325 aa)) is enoylreductase (ER). Residues 1765–2008 (GAYVITGGLG…RSPFAELFLA (244 aa)) are beta-ketoacyl reductase (KR). NADP(+)-binding positions include 1773–1776 (LGGL), 1796–1799 (SRSA), 1824–1825 (DI), and 1902–1903 (FS). In terms of domain architecture, Carrier spans 2029–2104 (EEWPTHLRRL…QRLCEMLDTD (76 aa)). Position 2064 is an O-(pantetheine 4'-phosphoryl)serine (S2064).

Homodimer.

It localises to the cell membrane. Its pathway is lipid metabolism; fatty acid biosynthesis. Its function is as follows. Polyketide synthase involved in the biosynthesis of 2,4-dimethyl-2-eicosenoic acid, a lipid component of the lipooligosaccharides (LOS) which are not located at the bacterial surface but rather in deeper compartments of the cell envelope of M.smegmatis. The chain is Mycocerosic acid synthase-like polyketide synthase from Mycolicibacterium smegmatis (strain ATCC 700084 / mc(2)155) (Mycobacterium smegmatis).